A 496-amino-acid polypeptide reads, in one-letter code: Probable cytosol aminopeptidase (496 aa).

Mn(2+) is bound by residues K266 and D271. K278 is a catalytic residue. Residues D289, D348, and E350 each contribute to the Mn(2+) site. Residue R352 is part of the active site.

The protein belongs to the peptidase M17 family. Mn(2+) serves as cofactor.

The protein resides in the cytoplasm. It carries out the reaction Release of an N-terminal amino acid, Xaa-|-Yaa-, in which Xaa is preferably Leu, but may be other amino acids including Pro although not Arg or Lys, and Yaa may be Pro. Amino acid amides and methyl esters are also readily hydrolyzed, but rates on arylamides are exceedingly low.. The enzyme catalyses Release of an N-terminal amino acid, preferentially leucine, but not glutamic or aspartic acids.. Presumably involved in the processing and regular turnover of intracellular proteins. Catalyzes the removal of unsubstituted N-terminal amino acids from various peptides. In Stutzerimonas stutzeri (strain A1501) (Pseudomonas stutzeri), this protein is Probable cytosol aminopeptidase.